A 531-amino-acid polypeptide reads, in one-letter code: Type 2 DNA topoisomerase 6 subunit B (531 aa).

Residues asparagine 42, aspartate 76, 97 to 98 (SK), 106 to 113 (GMYGLGVK), and lysine 427 each bind ATP.

This sequence belongs to the TOP6B family. Homodimer. Heterotetramer of two Top6A and two Top6B chains.

The enzyme catalyses ATP-dependent breakage, passage and rejoining of double-stranded DNA.. Functionally, relaxes both positive and negative superturns and exhibits a strong decatenase activity. This Metallosphaera sedula (strain ATCC 51363 / DSM 5348 / JCM 9185 / NBRC 15509 / TH2) protein is Type 2 DNA topoisomerase 6 subunit B.